Consider the following 346-residue polypeptide: MIELKNVSKVFTTKKGNVEALKSTSLQVKKGEVFGIIGYSGAGKSTLIRCVNLLEKPTTGNIIVNSQDLTTLSAKELAKARQKIGMIFQGFNLLKTVTVYENIALPLRLAGISKVEIEKRVEKYLRIVDLFTRKDAYPSELSGGQKQRVAIARALSHEPEVLLSDEATSALDPETTDSILDLLLKINEEIGITILLITHEMNVIQRICDRVAVMEHGAVVESGTVKDIFTNPQHVTTKKFVNSAFAAKIPEDVQKELQTTGEIVTLSFIGNSSGEPALAVATKRFQVYPNILSGNITQLKHEAYGKLIIHMQGEQNEINRALSFLQEQGIIVEGGRTDHGKQVLFG.

One can recognise an ABC transporter domain in the interval 2 to 241; the sequence is IELKNVSKVF…PQHVTTKKFV (240 aa). 38-45 contacts ATP; sequence GYSGAGKS.

Belongs to the ABC transporter superfamily. Methionine importer (TC 3.A.1.24) family. As to quaternary structure, the complex is composed of two ATP-binding proteins (MetN), two transmembrane proteins (MetI) and a solute-binding protein (MetQ).

It is found in the cell membrane. It carries out the reaction L-methionine(out) + ATP + H2O = L-methionine(in) + ADP + phosphate + H(+). The enzyme catalyses D-methionine(out) + ATP + H2O = D-methionine(in) + ADP + phosphate + H(+). Functionally, part of the ABC transporter complex MetNIQ involved in methionine import. Responsible for energy coupling to the transport system. The chain is Methionine import ATP-binding protein MetN 1 from Bacillus cereus (strain ATCC 10987 / NRS 248).